The chain runs to 191 residues: MAVSTVSSFLLPSFGIPSSSPSSTRLKVSLLPSSSTHGGLSSCVLTKPSVSLTKVFAVPDTLDPTPEILDEPASEVPSSSSISVDADKMAPKQKIRIKLRSYWVPLIEDSCKQILDAARNTNAKTMGPVPLPTKKRIYCVLKSPHVHKDARFHFEIRTHQRMIDILYPTAQTIDSLMQLDLPAGVDVEVKL.

Residues 1 to 56 (MAVSTVSSFLLPSFGIPSSSPSSTRLKVSLLPSSSTHGGLSSCVLTKPSVSLTKVF) constitute a chloroplast transit peptide.

The protein belongs to the universal ribosomal protein uS10 family. As to quaternary structure, part of the 30S ribosomal subunit.

It localises to the plastid. It is found in the chloroplast. The protein is Small ribosomal subunit protein uS10c (RPS10) of Arabidopsis thaliana (Mouse-ear cress).